Here is a 438-residue protein sequence, read N- to C-terminus: Phosphoribosylamine--glycine ligase (438 aa).

The region spanning Arg108–Asp316 is the ATP-grasp domain. ATP is bound at residue Val135 to Thr194. Mg(2+)-binding residues include Gln274, Glu286, and Asn288. Residues Gln274, Glu286, and Asn288 each contribute to the Mn(2+) site.

The protein belongs to the GARS family. It depends on Mg(2+) as a cofactor. Mn(2+) serves as cofactor.

The enzyme catalyses 5-phospho-beta-D-ribosylamine + glycine + ATP = N(1)-(5-phospho-beta-D-ribosyl)glycinamide + ADP + phosphate + H(+). It functions in the pathway purine metabolism; IMP biosynthesis via de novo pathway; N(1)-(5-phospho-D-ribosyl)glycinamide from 5-phospho-alpha-D-ribose 1-diphosphate: step 2/2. The polypeptide is Phosphoribosylamine--glycine ligase (Thermococcus gammatolerans (strain DSM 15229 / JCM 11827 / EJ3)).